Here is a 492-residue protein sequence, read N- to C-terminus: Catalase isozyme A (492 aa).

The interval 1-23 (MDPCKFRPSSSFDTKTTTTNAGA) is disordered. Polar residues predominate over residues 8-21 (PSSSFDTKTTTTNA). Active-site residues include His65 and Asn138. Residue Tyr348 participates in heme binding.

It belongs to the catalase family. In terms of assembly, homotetramer. Heme is required as a cofactor.

It is found in the peroxisome. The protein localises to the glyoxysome. The catalysed reaction is 2 H2O2 = O2 + 2 H2O. Its function is as follows. Occurs in almost all aerobically respiring organisms and serves to protect cells from the toxic effects of hydrogen peroxide. This Oryza sativa subsp. indica (Rice) protein is Catalase isozyme A.